Consider the following 183-residue polypeptide: Ribosome maturation factor RimP (183 aa).

It belongs to the RimP family.

The protein localises to the cytoplasm. Its function is as follows. Required for maturation of 30S ribosomal subunits. The polypeptide is Ribosome maturation factor RimP (Leptothrix cholodnii (strain ATCC 51168 / LMG 8142 / SP-6) (Leptothrix discophora (strain SP-6))).